Here is a 188-residue protein sequence, read N- to C-terminus: Ribonuclease HII (188 aa).

The RNase H type-2 domain occupies 6–188; sequence KPLCGIDEAG…VKGLDEPTLF (183 aa). Positions 12, 13, and 99 each coordinate a divalent metal cation.

This sequence belongs to the RNase HII family. Mn(2+) serves as cofactor. Mg(2+) is required as a cofactor.

Its subcellular location is the cytoplasm. It carries out the reaction Endonucleolytic cleavage to 5'-phosphomonoester.. Its function is as follows. Endonuclease that specifically degrades the RNA of RNA-DNA hybrids. The sequence is that of Ribonuclease HII from Sulfurovum sp. (strain NBC37-1).